A 523-amino-acid chain; its full sequence is L-tyrosine:2-oxoglutarate aminotransferase ucdG (523 aa).

This sequence belongs to the class-I pyridoxal-phosphate-dependent aminotransferase family. As to quaternary structure, homodimer. Pyridoxal 5'-phosphate is required as a cofactor.

The protein localises to the cytoplasm. The enzyme catalyses L-tyrosine + 2-oxoglutarate = 3-(4-hydroxyphenyl)pyruvate + L-glutamate. Its pathway is secondary metabolite biosynthesis. Its function is as follows. Nonribosomal peptide synthetase that mediates the biosynthesis of usterphenyllins and uscandidusins, p-terphenyl derivatives. Within the pathway, ucdG is probably involved in the conversion of L-tyrosine into 4-hydroxyphenylpyruvate (HPPA) as a precursor for the usterphenyllin and uscandidusin biosynthesis. UcdE further prenylates position C-14 of ring C of usterphenyllin B to form usterphenyllin A. The pathway begin with the biosynthesis of 4-hydroxyphenylpyruvate (HPPA) from L-tyrosine, possibly by the aminotransferase ucdG. The nonribosomal peptide synthetase ucdA then condenses two HPPA units to produce atromentin. The key step in this pathway is the reduction and dehydration of atromentin to form a terphenyl triol intermediate, performed by the NAD-dependent dehydrogenase ucdB. Further O-methylation by the methyltransferase ucdC forms terphenyllin carrying two methoxy moieties at C-9 and C-12, and subsequent dihydroxylation at C-3 of ring A and C-15 of ring C by the flavin-dependent oxygenase ucdD leads to 3,15-dihydroxyterphenyllin. Prenylation by ucdE at position C-5 of ring A forms usterphenyllin B, and is followed by a second prenylation at position C-14 of ring C to form usterphenyllin A. The following furan ring formation that leads to uscandidusins A and B was proven to be an unexpected spontaneous non-enzymatic reaction. In Aspergillus ustus, this protein is L-tyrosine:2-oxoglutarate aminotransferase ucdG.